A 674-amino-acid chain; its full sequence is Pre-mRNA-splicing factor cwf4 (674 aa).

HAT repeat units lie at residues 50-82 (EFQG…WELD), 84-116 (KEFA…CEMK), 118-150 (RNIN…MEEM), 152-183 (GNIT…MERR), 185-216 (HENE…FEEE), 218-253 (GNAA…FEIR), 255-289 (KEYE…FEKQ), 299-331 (TVLD…LEES), 333-367 (GDIN…IWLN), 377-413 (KDVD…FELR), 415-446 (RKID…FEDA), 448-480 (KQFD…LETK), 482-516 (GDSD…FEFE), 518-549 (MEYG…FEIA), 567-608 (TAVV…MHGT), and 610-643 (DTRK…YLFP).

Belongs to the crooked-neck family. As to quaternary structure, belongs to the 40S cdc5-associated complex (or cwf complex), a spliceosome sub-complex reminiscent of a late-stage spliceosome composed of the U2, U5 and U6 snRNAs and at least brr2, cdc5, cwf2/prp3, cwf3/syf1, cwf4/syf3, cwf5/ecm2, spp42/cwf6, cwf7/spf27, cwf8, cwf9, cwf10, cwf11, cwf12, prp45/cwf13, cwf14, cwf15, cwf16, cwf17, cwf18, cwf19, cwf20, cwf21, cwf22, cwf23, cwf24, cwf25, cwf26, cyp7/cwf27, cwf28, cwf29/ist3, lea1, msl1, prp5/cwf1, prp10, prp12/sap130, prp17, prp22, sap61, sap62, sap114, sap145, slu7, smb1, smd1, smd3, smf1, smg1 and syf2.

It localises to the nucleus. In terms of biological role, involved in pre-mRNA splicing and cell cycle progression. Required for the spliceosome assembly and initiation of the DNA replication. This Schizosaccharomyces pombe (strain 972 / ATCC 24843) (Fission yeast) protein is Pre-mRNA-splicing factor cwf4 (cwf4).